We begin with the raw amino-acid sequence, 475 residues long: Sulfate adenylyltransferase subunit 1 (475 aa).

Residues 25–239 (KSLLRFLTCG…EVLETVEIQR (215 aa)) form the tr-type G domain. The tract at residues 34-41 (GSVDDGKS) is G1. 34–41 (GSVDDGKS) is a GTP binding site. A G2 region spans residues 92–96 (GITID). The segment at 113-116 (DTPG) is G3. Residues 113–117 (DTPGH) and 168–171 (NKMD) contribute to the GTP site. The tract at residues 168-171 (NKMD) is G4. The segment at 206–208 (SAL) is G5.

It belongs to the TRAFAC class translation factor GTPase superfamily. Classic translation factor GTPase family. CysN/NodQ subfamily. In terms of assembly, heterodimer composed of CysD, the smaller subunit, and CysN.

It catalyses the reaction sulfate + ATP + H(+) = adenosine 5'-phosphosulfate + diphosphate. It functions in the pathway sulfur metabolism; hydrogen sulfide biosynthesis; sulfite from sulfate: step 1/3. Its function is as follows. With CysD forms the ATP sulfurylase (ATPS) that catalyzes the adenylation of sulfate producing adenosine 5'-phosphosulfate (APS) and diphosphate, the first enzymatic step in sulfur assimilation pathway. APS synthesis involves the formation of a high-energy phosphoric-sulfuric acid anhydride bond driven by GTP hydrolysis by CysN coupled to ATP hydrolysis by CysD. The protein is Sulfate adenylyltransferase subunit 1 of Shigella boydii serotype 18 (strain CDC 3083-94 / BS512).